A 188-amino-acid polypeptide reads, in one-letter code: Elongation factor P (188 aa).

N6-(3,6-diaminohexanoyl)-5-hydroxylysine is present on Lys-34.

Belongs to the elongation factor P family. In terms of processing, may be beta-lysylated on the epsilon-amino group of Lys-34 by the combined action of EpmA and EpmB, and then hydroxylated on the C5 position of the same residue by EpmC (if this protein is present). Lysylation is critical for the stimulatory effect of EF-P on peptide-bond formation. The lysylation moiety may extend toward the peptidyltransferase center and stabilize the terminal 3-CCA end of the tRNA. Hydroxylation of the C5 position on Lys-34 may allow additional potential stabilizing hydrogen-bond interactions with the P-tRNA.

Its subcellular location is the cytoplasm. The protein operates within protein biosynthesis; polypeptide chain elongation. Its function is as follows. Involved in peptide bond synthesis. Alleviates ribosome stalling that occurs when 3 or more consecutive Pro residues or the sequence PPG is present in a protein, possibly by augmenting the peptidyl transferase activity of the ribosome. Modification of Lys-34 is required for alleviation. This chain is Elongation factor P, found in Yersinia pseudotuberculosis serotype O:1b (strain IP 31758).